The primary structure comprises 171 residues: Protein-export protein SecB (171 aa).

Belongs to the SecB family. Homotetramer, a dimer of dimers. One homotetramer interacts with 1 SecA dimer.

It is found in the cytoplasm. One of the proteins required for the normal export of preproteins out of the cell cytoplasm. It is a molecular chaperone that binds to a subset of precursor proteins, maintaining them in a translocation-competent state. It also specifically binds to its receptor SecA. This chain is Protein-export protein SecB, found in Xanthomonas oryzae pv. oryzae (strain MAFF 311018).